Reading from the N-terminus, the 406-residue chain is MSAILQGAGAATALSPFNSIDSNKLVAPSRSSLSVRSKRYIVAGSDSKSFGSSLVARRSEPLIPNAVTTKADTAASSTSSKPGHELLLFEALQEGLEEEMDRDPHVCVMGEDVGHYGGSYKVTKGLADKFGDLRVLDTPICENAFTGMGIGAAMTGLRPVIEGMNMGFLLLAFNQISNNCGMLHYTSGGQFTIPVVIRGPGGVGRQLGAEHSQRLESYFQSIPGIQMVACSTPYNAKGLMKAAIRSENPVILFEHVLLYNLKESIPDEEYICNLEEAEMVRPGEHITILTYSRMRYHVMQAAKTLVNKGYDPEVIDIRSLKPFDLYTIGNSVKKTHRVLIVEECMRTGGIGASLTAAINENFHDYLDAPVMCLSSQDVPTPYAGTLEEWTVVQPAQIVTAVEQLCQ.

The N-terminal 70 residues, 1-70 (MSAILQGAGA…PLIPNAVTTK (70 aa)), are a transit peptide targeting the chloroplast. Position 142 (glutamate 142) interacts with thiamine diphosphate. K(+) is bound by residues valine 195, alanine 243, isoleucine 244, and asparagine 248.

As to quaternary structure, tetramer of 2 alpha and 2 beta subunits. It depends on thiamine diphosphate as a cofactor.

Its subcellular location is the plastid. It is found in the chloroplast. The enzyme catalyses N(6)-[(R)-lipoyl]-L-lysyl-[protein] + pyruvate + H(+) = N(6)-[(R)-S(8)-acetyldihydrolipoyl]-L-lysyl-[protein] + CO2. Its function is as follows. The pyruvate dehydrogenase complex catalyzes the overall conversion of pyruvate to acetyl-CoA and CO(2). It contains multiple copies of three enzymatic components: pyruvate dehydrogenase (E1), dihydrolipoamide acetyltransferase (E2) and lipoamide dehydrogenase (E3). This chain is Pyruvate dehydrogenase E1 component subunit beta-3, chloroplastic (E1-BETA-2), found in Arabidopsis thaliana (Mouse-ear cress).